A 398-amino-acid chain; its full sequence is UDP-D-apiose/UDP-D-xylose synthase (398 aa).

Residue 57-88 (DVYCDKIRHLVDPAPPHLHGRISFHRLNIKND) coordinates NAD(+). Substrate is bound at residue R190. The active-site Proton acceptor is the Y193. NAD(+) is bound at residue 193–197 (YACAK). N222 is a binding site for substrate. Residue R243 coordinates NAD(+). Residues 244-248 (VLACF), 261-268 (VDGGQSQR), and 345-349 (DSDKR) contribute to the substrate site.

Belongs to the NAD(P)-dependent epimerase/dehydratase family. In terms of assembly, homodimer. Requires NAD(+) as cofactor.

It is found in the cytoplasm. Functionally, catalyzes the conversion of UDP-D-glucuronate to a mixture of UDP-D-apiose and UDP-D-xylose. D-Apiose (3-C-hydroxymethyl-d-erythrose) is the only plant cell wall monosaccharide with a branched carbon skeleton and found in rhamnogalacturonan II (RG-II), apiogalacturonan, and several apioglycosides. The sequence is that of UDP-D-apiose/UDP-D-xylose synthase from Oryza sativa subsp. japonica (Rice).